A 306-amino-acid polypeptide reads, in one-letter code: Golgi to ER traffic protein 2 (306 aa).

Basic and acidic residues predominate over residues 1 to 18 (MSEISDAEKRRILREKRQ). The tract at residues 1-100 (MSEISDAEKR…PPGSAEQQNG (100 aa)) is disordered. Over 1–172 (MSEISDAEKR…VEAHNIAVNK (172 aa)) the chain is Cytoplasmic. Residues 34-57 (TGQTENSFLSTESPLDSRESTYPA) show a composition bias toward polar residues. The segment covering 68 to 77 (DSTKQMDELL) has biased composition (basic and acidic residues). A compositionally biased stretch (low complexity) spans 78–90 (AKATSKTTSKASS). Residues 91 to 100 (PPGSAEQQNG) show a composition bias toward polar residues. Residues 173-193 (LKSYTILVKWLFFLLPYLYYI) form a helical membrane-spanning segment. Over 194-214 (THSARDPFQHNAVNYVLDRSN) the chain is Lumenal. A helical membrane pass occupies residues 215–234 (FFTVFTTFEIVALSVYYQLL). The Cytoplasmic segment spans residues 235–281 (MSAEKSHNVNTLDNNSKILKLVSMVPPGLVPIPNLRGKVAQALQYWD). The helical transmembrane segment at 282–302 (VVSMYLTDLCFAIVLAGLFQY) threads the bilayer. Over 303 to 306 (YHSM) the chain is Lumenal.

It belongs to the GET2 family. In terms of assembly, component of the Golgi to ER traffic (GET) complex, which is composed of GET1, GET2 and GET3. Within the complex, GET1 and GET2 form a heterotetramer which is stabilized by phosphatidylinositol binding and which binds to the GET3 homodimer.

It is found in the endoplasmic reticulum membrane. The protein resides in the golgi apparatus membrane. Required for the post-translational delivery of tail-anchored (TA) proteins to the endoplasmic reticulum. Together with GET1, acts as a membrane receptor for soluble GET3, which recognizes and selectively binds the transmembrane domain of TA proteins in the cytosol. The GET complex cooperates with the HDEL receptor ERD2 to mediate the ATP-dependent retrieval of resident ER proteins that contain a C-terminal H-D-E-L retention signal from the Golgi to the ER. This chain is Golgi to ER traffic protein 2, found in Lachancea thermotolerans (strain ATCC 56472 / CBS 6340 / NRRL Y-8284) (Yeast).